The following is a 147-amino-acid chain: Sec-independent protein translocase protein TatB (147 aa).

A helical membrane pass occupies residues 2-22 (FSSIGWPEIFTVLILGLIIIG). The tract at residues 96 to 147 (FDPKKIMASGTEGEAYRERGINPQPAGDSASPQTPSNKESQPKAGFSWDDIT) is disordered. The span at 125–134 (ASPQTPSNKE) shows a compositional bias: polar residues.

This sequence belongs to the TatB family. The Tat system comprises two distinct complexes: a TatABC complex, containing multiple copies of TatA, TatB and TatC subunits, and a separate TatA complex, containing only TatA subunits. Substrates initially bind to the TatABC complex, which probably triggers association of the separate TatA complex to form the active translocon.

It localises to the cell membrane. In terms of biological role, part of the twin-arginine translocation (Tat) system that transports large folded proteins containing a characteristic twin-arginine motif in their signal peptide across membranes. Together with TatC, TatB is part of a receptor directly interacting with Tat signal peptides. TatB may form an oligomeric binding site that transiently accommodates folded Tat precursor proteins before their translocation. This Corynebacterium diphtheriae (strain ATCC 700971 / NCTC 13129 / Biotype gravis) protein is Sec-independent protein translocase protein TatB.